The following is a 514-amino-acid chain: Adenylosuccinate synthetase 2, chloroplastic (514 aa).

A chloroplast-targeting transit peptide spans Met1–Arg56. GTP is bound by residues Gly100 to Lys106 and Gly128 to Thr130. Asp101 serves as the catalytic Proton acceptor. Residues Asp101 and Gly128 each coordinate Mg(2+). IMP contacts are provided by residues Asp101–Lys104, Asn126–His129, Thr218, Arg232, Gln312, Thr327, and Arg391. Catalysis depends on His129, which acts as the Proton donor. Residue Thr387 to Arg393 participates in substrate binding. Residues Arg393, Lys419–Asp421, and Gly502–Gly504 each bind GTP.

Belongs to the adenylosuccinate synthetase family. Homodimer. Mg(2+) serves as cofactor.

It is found in the plastid. The protein localises to the chloroplast. The enzyme catalyses IMP + L-aspartate + GTP = N(6)-(1,2-dicarboxyethyl)-AMP + GDP + phosphate + 2 H(+). The protein operates within purine metabolism; AMP biosynthesis via de novo pathway; AMP from IMP: step 1/2. Plays an important role in the de novo pathway and in the salvage pathway of purine nucleotide biosynthesis. Catalyzes the first committed step in the biosynthesis of AMP from IMP. The chain is Adenylosuccinate synthetase 2, chloroplastic from Physcomitrium patens (Spreading-leaved earth moss).